A 416-amino-acid chain; its full sequence is MKHASEFLNFIQERGYLYQCTNIEGLDQLLLQSNYIVAYIGFDCTAPSLHAGHLIQIMMLCHLQKFGYKPIVLLGGGTTKIGDPSFKDKARSILPVENINQNTSSIRRILEKMVSFNDSKTGAMIVNNADWLDNIKYIDFLRDIGAYFSVNRMLSFDSVKTRLDREQTLSFLEFNYMLLQAYDFIELNKKYDCRLQIGGSDQWGNIVNGIELGKKLNLPELFGLTMPLLLNAQGKKMGKTESGAVWLDDNMLKPYDYWQYFRNVDDQDVGRFLRLLTDVPIDEIRKLESLKDQEINEAKKVLATEVTKICHGDKEAELAQFAAISAFENEDSSLLPDYIIKKEQVASGISLVDLLHDTGFEPSKGAAKRLIQGNGCKINDNVVNNIDHVINFESFKDQPFIKLSAGKKRHIKVVVD.

Tyr-39 is an L-tyrosine binding site. The 'HIGH' region motif lies at 44-53 (CTAPSLHAGH). L-tyrosine is bound by residues Tyr-176 and Gln-180. Residues 236 to 240 (KMGKT) carry the 'KMSKS' region motif. Lys-239 is an ATP binding site. The 66-residue stretch at 349-414 (ISLVDLLHDT…AGKKRHIKVV (66 aa)) folds into the S4 RNA-binding domain.

Belongs to the class-I aminoacyl-tRNA synthetase family. TyrS type 1 subfamily. As to quaternary structure, homodimer.

It is found in the cytoplasm. The catalysed reaction is tRNA(Tyr) + L-tyrosine + ATP = L-tyrosyl-tRNA(Tyr) + AMP + diphosphate + H(+). Its function is as follows. Catalyzes the attachment of tyrosine to tRNA(Tyr) in a two-step reaction: tyrosine is first activated by ATP to form Tyr-AMP and then transferred to the acceptor end of tRNA(Tyr). The protein is Tyrosine--tRNA ligase of Wolbachia pipientis wMel.